We begin with the raw amino-acid sequence, 141 residues long: VLSPADKTNVKASWEKIGGHGAAYGAEALERMFLSFPTTKTYFPHFDLSHGSAQVQGHGKKVADALANAAAHVDDLPGALSALSDLHAHKLRVDPVNFKLLSHCLLVTLAAHHPAEFTPAVHASLDKFLASVSTVLTSKYR.

One can recognise a Globin domain in the interval 1-141; sequence VLSPADKTNV…VSTVLTSKYR (141 aa). Phosphoserine is present on Ser-3. An N6-succinyllysine modification is found at Lys-7. Thr-8 carries the phosphothreonine modification. N6-succinyllysine is present on Lys-11. The residue at position 16 (Lys-16) is an N6-acetyllysine; alternate. Position 16 is an N6-succinyllysine; alternate (Lys-16). Tyr-24 is subject to Phosphotyrosine. Position 35 is a phosphoserine (Ser-35). Lys-40 carries the N6-succinyllysine modification. Phosphoserine is present on Ser-49. Position 58 (His-58) interacts with O2. His-87 lines the heme b pocket. At Ser-102 the chain carries Phosphoserine. Residue Thr-108 is modified to Phosphothreonine. Phosphoserine occurs at positions 124 and 131. Phosphothreonine is present on residues Thr-134 and Thr-137. Position 138 is a phosphoserine (Ser-138).

Belongs to the globin family. Heterotetramer of two alpha chains and two beta chains. Red blood cells.

Its function is as follows. Involved in oxygen transport from the lung to the various peripheral tissues. Functionally, hemopressin acts as an antagonist peptide of the cannabinoid receptor CNR1. Hemopressin-binding efficiently blocks cannabinoid receptor CNR1 and subsequent signaling. In Urocitellus parryii (Arctic ground squirrel), this protein is Hemoglobin subunit alpha (HBA).